Consider the following 484-residue polypeptide: Probable endopeptidase p60 (484 aa).

A signal peptide spans Met1–Ala27. A LysM 1 domain is found at Ser28–Val71. The region spanning Lys80–Ala144 is the SH3b domain. The segment at Ala150 to Glu192 is disordered. Low complexity predominate over residues Thr160–Glu169. Positions Thr201–Ile244 constitute a LysM 2 domain. The interval Lys254–Ser367 is disordered. Low complexity-rich tracts occupy residues Lys273 to Thr282 and Ala289 to Ser367. The tract at residues Thr311 to Asn355 is 19 X 2 AA tandem repeats of T-N. Residues Asn366–Val484 enclose the NlpC/P60 domain. Cys396 acts as the Nucleophile in catalysis. Catalysis depends on His446, which acts as the Proton acceptor. Residue Asn458 is part of the active site.

This sequence belongs to the peptidase C40 family.

The protein localises to the cell surface. Its subcellular location is the secreted. This major extracellular protein may be involved in the invasion of non-professional phagocytic cells by Listeria. The chain is Probable endopeptidase p60 (iap) from Listeria monocytogenes serovar 1/2a (strain ATCC BAA-679 / EGD-e).